Reading from the N-terminus, the 674-residue chain is Primary amine oxidase (674 aa).

An N-terminal signal peptide occupies residues 1–25; that stretch reads MASTTTMRLALFSVLTLLSFHAVVS. N-linked (GlcNAc...) asparagine glycosylation is present at N156. C162 and C183 are joined by a disulfide. A compositionally biased stretch (polar residues) spans 226–236; the sequence is ENTEYQVSKQS. A disordered region spans residues 226–251; the sequence is ENTEYQVSKQSPPFGPKQHSLTSHQP. 323–334 lines the substrate pocket; it reads FFDSGEFGFGLS. The Proton acceptor role is filled by D325. C344 and C370 are joined by a disulfide. N-linked (GlcNAc...) asparagine glycosylation occurs at N389. 409 to 414 contacts substrate; sequence VGNYDN. Residue Y412 is the Schiff-base intermediate with substrate; via topaquinone of the active site. Y412 is subject to 2',4',5'-topaquinone. Cu cation is bound by residues H467 and H469. D476, F477, D478, D617, and I618 together coordinate Mn(2+). A Cu cation-binding site is contributed by H628.

It belongs to the copper/topaquinone oxidase family. As to quaternary structure, homodimer. Requires Cu cation as cofactor. Mn(2+) serves as cofactor. It depends on L-topaquinone as a cofactor. Post-translationally, topaquinone (TPQ) is generated by copper-dependent autoxidation of a specific tyrosyl residue.

The catalysed reaction is a primary methyl amine + O2 + H2O = an aldehyde + H2O2 + NH4(+). This is Primary amine oxidase from Pisum sativum (Garden pea).